Consider the following 450-residue polypeptide: Glutamyl-tRNA(Gln) amidotransferase subunit A, mitochondrial (450 aa).

Residues K47 and S122 each act as charge relay system in the active site. The active-site Acyl-ester intermediate is the S146.

Belongs to the amidase family. GatA subfamily. In terms of assembly, subunit of the heterotrimeric GatFAB amidotransferase (AdT) complex, composed of A, B and F subunits.

It is found in the mitochondrion. The catalysed reaction is L-glutamyl-tRNA(Gln) + L-glutamine + ATP + H2O = L-glutaminyl-tRNA(Gln) + L-glutamate + ADP + phosphate + H(+). Allows the formation of correctly charged Gln-tRNA(Gln) through the transamidation of misacylated Glu-tRNA(Gln) in the mitochondria. The reaction takes place in the presence of glutamine and ATP through an activated gamma-phospho-Glu-tRNA(Gln). This Candida albicans (strain WO-1) (Yeast) protein is Glutamyl-tRNA(Gln) amidotransferase subunit A, mitochondrial.